The sequence spans 383 residues: Activator of 90 kDa heat shock protein ATPase homolog (383 aa).

Disordered regions lie at residues 97 to 126 (KKVLPPPPTTKSKGAADDIDEEDDDGKPAE) and 209 to 228 (EQSQQQQTANTTTNTTTTTN).

This sequence belongs to the AHA1 family. Interacts with hspD/HSP90.

It localises to the cytoplasm. In terms of biological role, co-chaperone that stimulates hspD/HSP90 ATPase activity. This chain is Activator of 90 kDa heat shock protein ATPase homolog (ahsa), found in Dictyostelium discoideum (Social amoeba).